The chain runs to 246 residues: Peroxisomal membrane protein 11A (246 aa).

Residues 1–93 are Cytoplasmic-facing; that stretch reads MDAFIRVANQ…LCLTLANLNR (93 aa). A helical transmembrane segment spans residues 94–114; it reads VVYYICDTVLWAKSVGLTSGV. Topologically, residues 115-217 are lumenal; the sequence is NREKWQRWAA…LNQLGIYKSN (103 aa). Residues 218 to 238 form a helical membrane-spanning segment; sequence LGVVGLGGLISSLAGLLTVVY. The interval 218-238 is required for homodimerization, interaction with PEX11G, and peroxisomal localization; that stretch reads LGVVGLGGLISSLAGLLTVVY. Over 239-246 the chain is Cytoplasmic; the sequence is PQLKLKAR.

It belongs to the peroxin-11 family. As to quaternary structure, homodimer. Heterodimer with PEX11G. Probably interacts with COPB2 and COPA. Interacts with PEX19. Interacts with FIS1. In terms of tissue distribution, strongly expressed in liver and at lower levels in heart, brain, kidney and testis.

The protein resides in the peroxisome membrane. In terms of biological role, may be involved in peroxisomal proliferation and may regulate peroxisomes division. May mediate binding of coatomer proteins to the peroxisomal membrane. Promotes membrane protrusion and elongation on the peroxisomal surface. This chain is Peroxisomal membrane protein 11A (Pex11a), found in Mus musculus (Mouse).